Here is a 214-residue protein sequence, read N- to C-terminus: Soluble inorganic pyrophosphatase (214 aa).

The disordered stretch occupies residues 1 to 20 (MSEEDKTAASAEQPKRAPKL). Lys64, Arg78, and Tyr90 together coordinate substrate. Mg(2+) contacts are provided by Asp100, Asp105, and Asp137. Tyr174 lines the substrate pocket.

Belongs to the PPase family. The cofactor is Mg(2+).

The protein resides in the cytoplasm. The enzyme catalyses diphosphate + H2O = 2 phosphate + H(+). The chain is Soluble inorganic pyrophosphatase (IPP) from Zea mays (Maize).